The following is a 56-amino-acid chain: UPF0391 membrane protein PSHAa0537 (56 aa).

The next 2 membrane-spanning stretches (helical) occupy residues isoleucine 6–alanine 26 and alanine 27–valine 47.

This sequence belongs to the UPF0391 family.

Its subcellular location is the cell membrane. The sequence is that of UPF0391 membrane protein PSHAa0537 from Pseudoalteromonas translucida (strain TAC 125).